The primary structure comprises 284 residues: Ribose-phosphate pyrophosphokinase 1 (284 aa).

D34–E36 contacts ATP. H126 and D163 together coordinate Mg(2+). K186 is an active-site residue. D-ribose 5-phosphate is bound by residues R188, D211, and S215–T219.

Belongs to the ribose-phosphate pyrophosphokinase family. Class III (archaeal) subfamily. Mg(2+) serves as cofactor.

Its subcellular location is the cytoplasm. The enzyme catalyses D-ribose 5-phosphate + ATP = 5-phospho-alpha-D-ribose 1-diphosphate + AMP + H(+). The protein operates within metabolic intermediate biosynthesis; 5-phospho-alpha-D-ribose 1-diphosphate biosynthesis; 5-phospho-alpha-D-ribose 1-diphosphate from D-ribose 5-phosphate (route I): step 1/1. Its function is as follows. Involved in the biosynthesis of the central metabolite phospho-alpha-D-ribosyl-1-pyrophosphate (PRPP) via the transfer of pyrophosphoryl group from ATP to 1-hydroxyl of ribose-5-phosphate (Rib-5-P). The sequence is that of Ribose-phosphate pyrophosphokinase 1 from Archaeoglobus fulgidus (strain ATCC 49558 / DSM 4304 / JCM 9628 / NBRC 100126 / VC-16).